We begin with the raw amino-acid sequence, 147 residues long: Cyanate hydratase (147 aa).

Residues Arg88, Glu91, and Ser114 contribute to the active site.

Belongs to the cyanase family.

The enzyme catalyses cyanate + hydrogencarbonate + 3 H(+) = NH4(+) + 2 CO2. Catalyzes the reaction of cyanate with bicarbonate to produce ammonia and carbon dioxide. This is Cyanate hydratase from Acaryochloris marina (strain MBIC 11017).